The following is a 218-amino-acid chain: Protease PrsW (218 aa).

The chain crosses the membrane as a helical span at residues 1–23 (MFAIISAGIAPGIALLSYFYLKD). Topologically, residues 24–30 (QYDNEPV) are cytoplasmic. A helical membrane pass occupies residues 31 to 53 (HMVLRSFFLGVVLVFPIMFIQYV). Over 54-98 (LEKENVGGGSFFVSFLSSGFLEESLKWFILMISVYPHAHFDEHYD) the chain is Extracellular. The helical transmembrane segment at 99 to 121 (GIVYGASVSLGFATLENILYLIG) threads the bilayer. The Cytoplasmic segment spans residues 122–129 (HGVEHAFV). The chain crosses the membrane as a helical span at residues 130–151 (RALLPVSCHALIGVIMGFYLGK). The Extracellular portion of the chain corresponds to 152 to 180 (ARFSADKARVKWLTLSLVVPSLLHGSYDF). The chain crosses the membrane as a helical span at residues 181 to 203 (ILTALSNWIYYMLPFMVFLWWFG). The Cytoplasmic segment spans residues 204–218 (LRKAKKARSVNMMQV).

It belongs to the protease PrsW family.

The protein localises to the cell membrane. In terms of biological role, involved in the degradation of anti-sigma-W factor RsiW. Responsible for Site-1 cleavage of the RsiW anti-sigma factor. This results, after two other proteolytic steps catalyzed by the RasP and ClpXP proteases, in the release of SigW and the transcription activation of the genes under the control of the sigma-W factor. Seems to be responsible for sensing antimicrobial peptides that damage the cell membrane and other agents that cause cell envelope stress. Therefore it is a protease governing regulated intramembrane proteolysis and resistance to antimicrobial peptides in B.subtilis. This chain is Protease PrsW, found in Bacillus subtilis (strain 168).